A 123-amino-acid polypeptide reads, in one-letter code: Nitrogen fixation nifHD1 region GlnB-like protein 2 (123 aa).

The protein belongs to the P(II) protein family.

Its function is as follows. Could be involved in the regulation of nitrogen fixation. This Methanosarcina barkeri protein is Nitrogen fixation nifHD1 region GlnB-like protein 2 (glnBB).